The sequence spans 265 residues: DNA repair protein RecO (265 aa).

The protein belongs to the RecO family.

Functionally, involved in DNA repair and RecF pathway recombination. The polypeptide is DNA repair protein RecO (Mycobacterium marinum (strain ATCC BAA-535 / M)).